We begin with the raw amino-acid sequence, 331 residues long: Cytosolic 5'-nucleotidase 3A (331 aa).

D83 functions as the Nucleophile in the catalytic mechanism. Mg(2+) contacts are provided by D83 and D85. D85 (proton donor) is an active-site residue. E130 lines the CMP pocket. E130 and S151 together coordinate N(7)-methyl-GMP. Residues S198 to A199 and K247 each bind substrate. D272 lines the Mg(2+) pocket.

The protein belongs to the pyrimidine 5'-nucleotidase family.

It localises to the cytoplasm. It catalyses the reaction N(7)-methyl-GMP + H2O = N(7)-methylguanosine + phosphate. It carries out the reaction a ribonucleoside 5'-phosphate + H2O = a ribonucleoside + phosphate. Its function is as follows. Nucleotidase which shows specific activity towards cytidine monophosphate (CMP) and 7-methylguanosine monophosphate (m(7)GMP). CMP seems to be the preferred substrate. This chain is Cytosolic 5'-nucleotidase 3A (NT5C3A), found in Gallus gallus (Chicken).